We begin with the raw amino-acid sequence, 354 residues long: Holliday junction branch migration complex subunit RuvB (354 aa).

The segment at 4–190 is large ATPase domain (RuvB-L); it reads TDKLAAERII…FGIVARLEFY (187 aa). ATP-binding positions include Leu-29, Arg-30, Gly-71, Lys-74, Thr-75, Thr-76, 137–139, Arg-180, Tyr-190, and Arg-227; that span reads EDY. A Mg(2+)-binding site is contributed by Thr-75. A small ATPAse domain (RuvB-S) region spans residues 191-261; that stretch reads NAEELARIVT…VADAALKMLD (71 aa). Residues 264-354 form a head domain (RuvB-H) region; the sequence is AVGFDLMDRK…LPGLWDSAAT (91 aa). Arg-300, Arg-319, and Arg-324 together coordinate DNA.

The protein belongs to the RuvB family. In terms of assembly, homohexamer. Forms an RuvA(8)-RuvB(12)-Holliday junction (HJ) complex. HJ DNA is sandwiched between 2 RuvA tetramers; dsDNA enters through RuvA and exits via RuvB. An RuvB hexamer assembles on each DNA strand where it exits the tetramer. Each RuvB hexamer is contacted by two RuvA subunits (via domain III) on 2 adjacent RuvB subunits; this complex drives branch migration. In the full resolvosome a probable DNA-RuvA(4)-RuvB(12)-RuvC(2) complex forms which resolves the HJ.

The protein localises to the cytoplasm. The enzyme catalyses ATP + H2O = ADP + phosphate + H(+). In terms of biological role, the RuvA-RuvB-RuvC complex processes Holliday junction (HJ) DNA during genetic recombination and DNA repair, while the RuvA-RuvB complex plays an important role in the rescue of blocked DNA replication forks via replication fork reversal (RFR). RuvA specifically binds to HJ cruciform DNA, conferring on it an open structure. The RuvB hexamer acts as an ATP-dependent pump, pulling dsDNA into and through the RuvAB complex. RuvB forms 2 homohexamers on either side of HJ DNA bound by 1 or 2 RuvA tetramers; 4 subunits per hexamer contact DNA at a time. Coordinated motions by a converter formed by DNA-disengaged RuvB subunits stimulates ATP hydrolysis and nucleotide exchange. Immobilization of the converter enables RuvB to convert the ATP-contained energy into a lever motion, pulling 2 nucleotides of DNA out of the RuvA tetramer per ATP hydrolyzed, thus driving DNA branch migration. The RuvB motors rotate together with the DNA substrate, which together with the progressing nucleotide cycle form the mechanistic basis for DNA recombination by continuous HJ branch migration. Branch migration allows RuvC to scan DNA until it finds its consensus sequence, where it cleaves and resolves cruciform DNA. In Paraburkholderia phytofirmans (strain DSM 17436 / LMG 22146 / PsJN) (Burkholderia phytofirmans), this protein is Holliday junction branch migration complex subunit RuvB.